The primary structure comprises 387 residues: Succinate--CoA ligase [ADP-forming] subunit beta (387 aa).

ATP contacts are provided by residues lysine 46, 53 to 55 (GRG), glutamate 99, alanine 102, and glutamate 107. Positions 199 and 213 each coordinate Mg(2+). Substrate-binding positions include asparagine 264 and 321–323 (GIV).

Belongs to the succinate/malate CoA ligase beta subunit family. Heterotetramer of two alpha and two beta subunits. Mg(2+) is required as a cofactor.

It carries out the reaction succinate + ATP + CoA = succinyl-CoA + ADP + phosphate. It catalyses the reaction GTP + succinate + CoA = succinyl-CoA + GDP + phosphate. It participates in carbohydrate metabolism; tricarboxylic acid cycle; succinate from succinyl-CoA (ligase route): step 1/1. Functionally, succinyl-CoA synthetase functions in the citric acid cycle (TCA), coupling the hydrolysis of succinyl-CoA to the synthesis of either ATP or GTP and thus represents the only step of substrate-level phosphorylation in the TCA. The beta subunit provides nucleotide specificity of the enzyme and binds the substrate succinate, while the binding sites for coenzyme A and phosphate are found in the alpha subunit. The protein is Succinate--CoA ligase [ADP-forming] subunit beta of Campylobacter jejuni subsp. jejuni serotype O:23/36 (strain 81-176).